Here is a 108-residue protein sequence, read N- to C-terminus: Circadian clock oscillator protein KaiB (108 aa).

The protein belongs to the KaiB family. In terms of assembly, homodimer, interacts with KaiC. The KaiABC complex composition changes during the circadian cycle to control KaiC phosphorylation. Complexes KaiC(6), KaiA(2-4):KaiC(6), KaiB(6):KaiC(6) and KaiC(6):KaiB(6):KaiA(12) are among the most important forms, many form cooperatively. Undergoes a major conformational rearrangment; in the free state forms homotetramers as a dimer of dimers. When bound to the CI domain of KaiC switches to a monomeric thioredoxin-fold (KaiB(fs)). KaiB(fs) binds CikA, leading it to dephosphorylate phospho-RpaA.

In terms of biological role, key component of the KaiABC oscillator complex, which constitutes the main circadian regulator in cyanobacteria. Complex composition changes during the circadian cycle to control KaiC phosphorylation. KaiA stimulates KaiC autophosphorylation, while KaiB sequesters KaiA, leading to KaiC autodephosphorylation. Phospho-Ser-431 KaiC accumulation triggers binding of KaiB to form the KaiB(6):KaiC(6) complex, leading to changes in output regulators CikA and SasA. KaiB switches to a thioredoxin-like fold (KaiB(fs)) when bound to KaiC. KaiB(6):KaiC(6) formation exposes a site for KaiA binding that sequesters KaiA from KaiC, making the KaiC(6):KaiB(6):KaiA(12) complex that results in KaiC autodephosphorylation. A metamorphic protein which reversibly switches between an inactive tetrameric fold and a rare, thioredoxin-like monomeric fold (KaiB(fs)). KaiB(fs) binds phospho-KaiC, KaiA and CikA. KaiA and CikA compete for binding to KaiB(fs), and KaiB(fs) and SasA compete for binding to KaiC, thus the clock oscillator and output signal pathway are tightly coupled. The chain is Circadian clock oscillator protein KaiB from Nostoc sp. (strain PCC 7120 / SAG 25.82 / UTEX 2576).